The primary structure comprises 354 residues: Cytoplasmic tRNA 2-thiolation protein 1 (354 aa).

Belongs to the TtcA family. CTU1/NCS6/ATPBD3 subfamily.

Its subcellular location is the cytoplasm. The protein operates within tRNA modification; 5-methoxycarbonylmethyl-2-thiouridine-tRNA biosynthesis. Functionally, plays a central role in 2-thiolation of mcm(5)S(2)U at tRNA wobble positions of tRNA(Lys), tRNA(Glu) and tRNA(Gln). Directly binds tRNAs and probably acts by catalyzing adenylation of tRNAs, an intermediate required for 2-thiolation. It is unclear whether it acts as a sulfurtransferase that transfers sulfur from thiocarboxylated URM1 onto the uridine of tRNAs at wobble position. Prior mcm(5) tRNA modification by the elongator complex is required for 2-thiolation. May also be involved in protein urmylation. The polypeptide is Cytoplasmic tRNA 2-thiolation protein 1 (Laccaria bicolor (strain S238N-H82 / ATCC MYA-4686) (Bicoloured deceiver)).